Reading from the N-terminus, the 411-residue chain is D-ribitol-5-phosphate cytidylyltransferase (411 aa).

The protein belongs to the IspD/TarI cytidylyltransferase family. IspD subfamily. In terms of assembly, homodimer.

It localises to the cytoplasm. The protein resides in the cytosol. The enzyme catalyses D-ribitol 5-phosphate + CTP + H(+) = CDP-L-ribitol + diphosphate. It carries out the reaction D-ribose 5-phosphate + CTP + H(+) = CDP-D-ribose + diphosphate. The catalysed reaction is D-ribulose 5-phosphate + CTP + H(+) = CDP-D-ribulose + diphosphate. It functions in the pathway protein modification; protein glycosylation. Cytidylyltransferase required for protein O-linked mannosylation. Catalyzes the formation of CDP-ribitol nucleotide sugar from D-ribitol 5-phosphate. CDP-ribitol is a substrate of FKTN during the biosynthesis of the phosphorylated O-mannosyl trisaccharide (N-acetylgalactosamine-beta-3-N-acetylglucosamine-beta-4-(phosphate-6-)mannose), a carbohydrate structure present in alpha-dystroglycan (DAG1), which is required for binding laminin G-like domain-containing extracellular proteins with high affinity. Shows activity toward other pentose phosphate sugars and mediates formation of CDP-ribulose or CDP-ribose using CTP and ribulose-5-phosphate or ribose-5-phosphate, respectively. Not involved in dolichol production. The sequence is that of D-ribitol-5-phosphate cytidylyltransferase (crppa) from Xenopus tropicalis (Western clawed frog).